A 323-amino-acid chain; its full sequence is 1-aminocyclopropane-1-carboxylate oxidase 4 (323 aa).

Methionine 1 is subject to N-acetylmethionine. The Fe2OG dioxygenase domain occupies 153–254; it reads PTFGTKVSNY…RMSIASFYNP (102 aa). Fe cation is bound by residues histidine 177, aspartate 179, and histidine 234. Arginine 245 is a binding site for 2-oxoglutarate.

It belongs to the iron/ascorbate-dependent oxidoreductase family. Fe cation serves as cofactor. In terms of tissue distribution, expressed in vegetative tissues. Expressed constitutively at a low level in leaves and blades.

It catalyses the reaction 1-aminocyclopropane-1-carboxylate + L-ascorbate + O2 = ethene + L-dehydroascorbate + hydrogen cyanide + CO2 + 2 H2O. It participates in alkene biosynthesis; ethylene biosynthesis via S-adenosyl-L-methionine; ethylene from S-adenosyl-L-methionine: step 2/2. In terms of biological role, enzyme involved in the ethylene biosynthesis. May promote stem elongation by maximizing the extensibility cells, possibly by activating ethylene biosynthesis, in response to very-long-chain fatty acids (VLCFAs C20:0 to C30:0). The sequence is that of 1-aminocyclopropane-1-carboxylate oxidase 4 (ACO4) from Arabidopsis thaliana (Mouse-ear cress).